The following is a 527-amino-acid chain: GMP synthase [glutamine-hydrolyzing] (527 aa).

Positions 13–202 (TILVLDFGSQ…AVDICGAAQK (190 aa)) constitute a Glutamine amidotransferase type-1 domain. Cysteine 89 (nucleophile) is an active-site residue. Active-site residues include histidine 176 and glutamate 178. Residues 203–402 (WSMENFVDTE…MGIPHDLVWR (200 aa)) enclose the GMPS ATP-PPase domain. 231–237 (SGGVDST) is an ATP binding site. Residues arginine 304, aspartate 464, lysine 519, and glutamate 525 each contribute to the XMP site.

In terms of assembly, homodimer. The cofactor is Mg(2+).

The protein resides in the cytoplasm. It is found in the cytosol. The catalysed reaction is XMP + L-glutamine + ATP + H2O = GMP + L-glutamate + AMP + diphosphate + 2 H(+). It functions in the pathway purine metabolism; GMP biosynthesis; GMP from XMP (L-Gln route): step 1/1. In terms of biological role, catalyzes the conversion of xanthine monophosphate (XMP) to GMP in the presence of glutamine and ATP through an adenyl-XMP intermediate. The sequence is that of GMP synthase [glutamine-hydrolyzing] (GUA1) from Yarrowia lipolytica (strain CLIB 122 / E 150) (Yeast).